We begin with the raw amino-acid sequence, 498 residues long: Ribulose bisphosphate carboxylase large chain (498 aa).

A propeptide spanning residues 1-2 (MS) is cleaved from the precursor. N-acetylproline is present on Pro-3. Lys-14 carries the post-translational modification N6,N6,N6-trimethyllysine. 2 residues coordinate substrate: Asn-123 and Thr-173. The active-site Proton acceptor is Lys-175. Lys-177 contacts substrate. 3 residues coordinate Mg(2+): Lys-201, Asp-203, and Glu-204. Residue Lys-201 is modified to N6-carboxylysine. His-294 functions as the Proton acceptor in the catalytic mechanism. The substrate site is built by Arg-295, His-327, and Ser-379. Positions 471–498 (PVDTLDPNDKKQRDNEDTLADKLFGDKG) are disordered.

This sequence belongs to the RuBisCO large chain family. Type I subfamily. Heterohexadecamer of 8 large chains and 8 small chains; disulfide-linked. The disulfide link is formed within the large subunit homodimers. Mg(2+) serves as cofactor. The disulfide bond which can form in the large chain dimeric partners within the hexadecamer appears to be associated with oxidative stress and protein turnover.

The protein localises to the plastid. The enzyme catalyses 2 (2R)-3-phosphoglycerate + 2 H(+) = D-ribulose 1,5-bisphosphate + CO2 + H2O. The catalysed reaction is D-ribulose 1,5-bisphosphate + O2 = 2-phosphoglycolate + (2R)-3-phosphoglycerate + 2 H(+). In terms of biological role, ruBisCO catalyzes two reactions: the carboxylation of D-ribulose 1,5-bisphosphate, the primary event in carbon dioxide fixation, as well as the oxidative fragmentation of the pentose substrate in the photorespiration process. Both reactions occur simultaneously and in competition at the same active site. This chain is Ribulose bisphosphate carboxylase large chain (rbcL), found in Cuscuta reflexa (Southern Asian dodder).